The chain runs to 375 residues: Erythronate-4-phosphate dehydrogenase (375 aa).

Serine 45 and threonine 67 together coordinate substrate. Aspartate 147 is a binding site for NAD(+). Arginine 209 is a catalytic residue. Residue aspartate 233 participates in NAD(+) binding. Glutamate 238 is an active-site residue. Catalysis depends on histidine 255, which acts as the Proton donor. Position 258 (glycine 258) interacts with NAD(+). Tyrosine 259 contributes to the substrate binding site.

This sequence belongs to the D-isomer specific 2-hydroxyacid dehydrogenase family. PdxB subfamily. Homodimer.

It is found in the cytoplasm. The enzyme catalyses 4-phospho-D-erythronate + NAD(+) = (R)-3-hydroxy-2-oxo-4-phosphooxybutanoate + NADH + H(+). It functions in the pathway cofactor biosynthesis; pyridoxine 5'-phosphate biosynthesis; pyridoxine 5'-phosphate from D-erythrose 4-phosphate: step 2/5. Its function is as follows. Catalyzes the oxidation of erythronate-4-phosphate to 3-hydroxy-2-oxo-4-phosphonooxybutanoate. In Shewanella amazonensis (strain ATCC BAA-1098 / SB2B), this protein is Erythronate-4-phosphate dehydrogenase.